Consider the following 227-residue polypeptide: Extracellular small neutral protease (227 aa).

Positions 1–29 are cleaved as a signal peptide; that stretch reads MRITLPLLSTAVGLGLTAAVLGTGPAATA. Positions 30 to 42 are excised as a propeptide; that stretch reads AAPQEPVRAAQLG. Ca(2+)-binding residues include aspartate 156 and threonine 158. Histidine 163 contacts Zn(2+). Glutamate 164 is a catalytic residue. 2 residues coordinate Zn(2+): histidine 167 and aspartate 173. Cysteine 179 and cysteine 192 are disulfide-bonded.

Belongs to the peptidase M7 family. The cofactor is Ca(2+). Zn(2+) is required as a cofactor. Post-translationally, the N-terminus is blocked.

The protein localises to the secreted. It catalyses the reaction Hydrolyzes proteins with a preference for Tyr or Phe in the P1' position. Has no action on amino-acid p-nitroanilides.. This is Extracellular small neutral protease (snpA) from Streptomyces lividans.